We begin with the raw amino-acid sequence, 457 residues long: uncharacterized protein (457 aa).

Helical transmembrane passes span 15–35 (YGAI…GAIA), 54–74 (IWVV…FSFL), 87–107 (GLVV…LQML), 112–132 (VIQG…IRLI), 144–164 (INSF…AAIL), 166–186 (IASW…ALLL), 205–225 (LPSA…LSGF), 229–249 (QSLT…IFFI), 269–289 (LFSL…LAMV), 308–328 (LLLT…GYLI), 334–354 (GLLG…LVLL), 357–377 (SPAD…FGLF), 400–420 (MLGT…ALML), and 428–448 (THVS…VSGL).

This sequence belongs to the major facilitator superfamily. TCR/Tet family.

Its subcellular location is the cell inner membrane. This is an uncharacterized protein from Escherichia coli (strain K12).